The primary structure comprises 406 residues: Phosphopentomutase (406 aa).

The Mn(2+) site is built by Asp10, Asp305, His310, Asp346, His347, and His358.

Belongs to the phosphopentomutase family. The cofactor is Mn(2+).

The protein resides in the cytoplasm. The enzyme catalyses 2-deoxy-alpha-D-ribose 1-phosphate = 2-deoxy-D-ribose 5-phosphate. It catalyses the reaction alpha-D-ribose 1-phosphate = D-ribose 5-phosphate. It functions in the pathway carbohydrate degradation; 2-deoxy-D-ribose 1-phosphate degradation; D-glyceraldehyde 3-phosphate and acetaldehyde from 2-deoxy-alpha-D-ribose 1-phosphate: step 1/2. Its function is as follows. Isomerase that catalyzes the conversion of deoxy-ribose 1-phosphate (dRib-1-P) and ribose 1-phosphate (Rib-1-P) to deoxy-ribose 5-phosphate (dRib-5-P) and ribose 5-phosphate (Rib-5-P), respectively. The chain is Phosphopentomutase from Rhizobium leguminosarum bv. trifolii (strain WSM2304).